The sequence spans 701 residues: Methionine--tRNA ligase (701 aa).

The 'HIGH' region signature appears at 13 to 23 (PYANGSIHLGH). Zn(2+) is bound by residues Cys-144, Cys-147, Cys-157, and Cys-160. Positions 336-340 (KMSKS) match the 'KMSKS' region motif. Lys-339 provides a ligand contact to ATP. The tRNA-binding domain occupies 600–701 (DFSKIDLRIA…SGAQPGMRVK (102 aa)).

It belongs to the class-I aminoacyl-tRNA synthetase family. MetG type 1 subfamily. In terms of assembly, homodimer. The cofactor is Zn(2+).

Its subcellular location is the cytoplasm. It carries out the reaction tRNA(Met) + L-methionine + ATP = L-methionyl-tRNA(Met) + AMP + diphosphate. Functionally, is required not only for elongation of protein synthesis but also for the initiation of all mRNA translation through initiator tRNA(fMet) aminoacylation. This is Methionine--tRNA ligase from Nitrosomonas eutropha (strain DSM 101675 / C91 / Nm57).